A 347-amino-acid polypeptide reads, in one-letter code: NADH-ubiquinone oxidoreductase chain 2 (347 aa).

11 helical membrane-spanning segments follow: residues 1-21 (MNPMIFIILLTTIMLGTFIVT), 25-45 (HWFMTWLGFEMNMMAIVPVLM), 59-79 (YFLTQATASMILMLAIIINLM), 96-116 (MLITIALTMKLGLAPFHFWVP), 122-142 (VSLPSGLILLTWQKIAPLSLL), 149-169 (VNMNILLLMSLLSIMIGGWGG), 178-198 (IMAYSSIAHMGWMMAIMVYNP), 201-221 (SLLNLLIYIFMTSSMFMLLIF), 237-257 (APIITIMSLTTLLSLGGLPPL), 274-294 (NSVILPTLMAILALLNLFFYM), and 326-346 (MLPLITISTLALPLTPMLILL).

The protein belongs to the complex I subunit 2 family. In terms of assembly, core subunit of respiratory chain NADH dehydrogenase (Complex I) which is composed of 45 different subunits. Interacts with TMEM242.

The protein localises to the mitochondrion inner membrane. It carries out the reaction a ubiquinone + NADH + 5 H(+)(in) = a ubiquinol + NAD(+) + 4 H(+)(out). Functionally, core subunit of the mitochondrial membrane respiratory chain NADH dehydrogenase (Complex I) that is believed to belong to the minimal assembly required for catalysis. Complex I functions in the transfer of electrons from NADH to the respiratory chain. The immediate electron acceptor for the enzyme is believed to be ubiquinone. This chain is NADH-ubiquinone oxidoreductase chain 2, found in Crocidura suaveolens gueldenstaedtii (Gueldenstaedt's shrew).